We begin with the raw amino-acid sequence, 312 residues long: Aspartate carbamoyltransferase catalytic subunit (312 aa).

R58 and T59 together coordinate carbamoyl phosphate. K86 is a binding site for L-aspartate. Carbamoyl phosphate-binding residues include R108, H136, and Q139. L-aspartate is bound by residues R169 and R223. Residues G264 and P265 each coordinate carbamoyl phosphate.

It belongs to the aspartate/ornithine carbamoyltransferase superfamily. ATCase family. In terms of assembly, heterododecamer (2C3:3R2) of six catalytic PyrB chains organized as two trimers (C3), and six regulatory PyrI chains organized as three dimers (R2).

The catalysed reaction is carbamoyl phosphate + L-aspartate = N-carbamoyl-L-aspartate + phosphate + H(+). The protein operates within pyrimidine metabolism; UMP biosynthesis via de novo pathway; (S)-dihydroorotate from bicarbonate: step 2/3. Catalyzes the condensation of carbamoyl phosphate and aspartate to form carbamoyl aspartate and inorganic phosphate, the committed step in the de novo pyrimidine nucleotide biosynthesis pathway. This Acetivibrio thermocellus (strain ATCC 27405 / DSM 1237 / JCM 9322 / NBRC 103400 / NCIMB 10682 / NRRL B-4536 / VPI 7372) (Clostridium thermocellum) protein is Aspartate carbamoyltransferase catalytic subunit.